The primary structure comprises 211 residues: Ribonuclease HII (211 aa).

An RNase H type-2 domain is found at 21 to 211 (SSIAGLDEAG…APLKSMFDVI (191 aa)). A divalent metal cation contacts are provided by Asp27, Glu28, and Asp122.

The protein belongs to the RNase HII family. Mn(2+) serves as cofactor. Mg(2+) is required as a cofactor.

The protein resides in the cytoplasm. It catalyses the reaction Endonucleolytic cleavage to 5'-phosphomonoester.. Functionally, endonuclease that specifically degrades the RNA of RNA-DNA hybrids. In Dehalococcoides mccartyi (strain ATCC BAA-2266 / KCTC 15142 / 195) (Dehalococcoides ethenogenes (strain 195)), this protein is Ribonuclease HII.